The primary structure comprises 420 residues: 3-isopropylmalate dehydratase large subunit (420 aa).

Positions 300, 360, and 363 each coordinate [4Fe-4S] cluster.

This sequence belongs to the aconitase/IPM isomerase family. LeuC type 2 subfamily. In terms of assembly, heterodimer of LeuC and LeuD. The cofactor is [4Fe-4S] cluster.

It catalyses the reaction (2R,3S)-3-isopropylmalate = (2S)-2-isopropylmalate. It functions in the pathway amino-acid biosynthesis; L-leucine biosynthesis; L-leucine from 3-methyl-2-oxobutanoate: step 2/4. Catalyzes the isomerization between 2-isopropylmalate and 3-isopropylmalate, via the formation of 2-isopropylmaleate. This is 3-isopropylmalate dehydratase large subunit from Clostridium kluyveri (strain ATCC 8527 / DSM 555 / NBRC 12016 / NCIMB 10680 / K1).